Here is a 718-residue protein sequence, read N- to C-terminus: Myeloperoxidase (718 aa).

The signal sequence occupies residues 1–15 (MKLLLALAGLLAPLA). The propeptide occupies 16-138 (MLQTSNGATP…SSGCAYQDVR (123 aa)). Asn113 is a glycosylation site (N-linked (GlcNAc...) asparagine). A disulfide bond links Cys141 and Cys154. Asp234 contributes to the heme b binding site. Catalysis depends on His235, which acts as the Proton acceptor. Asp236 contacts Ca(2+). 2 disulfides stabilise this stretch: Cys255/Cys265 and Cys259/Cys283. The residue at position 290 (Cys290) is a Cysteine sulfenic acid (-SOH). Asn297 carries N-linked (GlcNAc...) asparagine glycosylation. 4 residues coordinate Ca(2+): Thr308, Phe310, Asp312, and Ser314. Asn329 and Asn365 each carry an N-linked (GlcNAc...) asparagine glycan. Residues Cys361 and Cys372 are joined by a disulfide bond. Heme b is bound by residues Glu382 and Met383. An N-linked (GlcNAc...) asparagine glycan is attached at Asn457. Position 476 (His476) interacts with heme b. Cystine bridges form between Cys580-Cys637 and Cys678-Cys704. N-linked (GlcNAc...) asparagine glycosylation occurs at Asn711.

It belongs to the peroxidase family. XPO subfamily. As to quaternary structure, homodimer; disulfide-linked. Each monomer consists of a light and a heavy chain. Found in a complex with CP and LTF; interacts directly with CP, which protects CP antioxidant properties by MPO. Requires Ca(2+) as cofactor. Heme b is required as a cofactor.

The protein localises to the lysosome. The catalysed reaction is chloride + H2O2 + H(+) = hypochlorous acid + H2O. In terms of biological role, part of the host defense system of polymorphonuclear leukocytes. It is responsible for microbicidal activity against a wide range of organisms. In the stimulated PMN, MPO catalyzes the production of hypohalous acids, primarily hypochlorous acid in physiologic situations, and other toxic intermediates that greatly enhance PMN microbicidal activity. Mediates the proteolytic cleavage of alpha-1-microglobulin to form t-alpha-1-microglobulin, which potently inhibits oxidation of low density lipoprotein particles and limits vascular damage. In Mus musculus (Mouse), this protein is Myeloperoxidase (Mpo).